Here is a 292-residue protein sequence, read N- to C-terminus: Elongation factor Ts (292 aa).

The segment at 79-82 is involved in Mg(2+) ion dislocation from EF-Tu; it reads TDFV.

It belongs to the EF-Ts family.

The protein resides in the cytoplasm. Its function is as follows. Associates with the EF-Tu.GDP complex and induces the exchange of GDP to GTP. It remains bound to the aminoacyl-tRNA.EF-Tu.GTP complex up to the GTP hydrolysis stage on the ribosome. The chain is Elongation factor Ts from Xanthomonas euvesicatoria pv. vesicatoria (strain 85-10) (Xanthomonas campestris pv. vesicatoria).